The chain runs to 529 residues: [Pyruvate dehydrogenase [acetyl-transferring]]-phosphatase 2, mitochondrial (529 aa).

A mitochondrion-targeting transit peptide spans M1–T66. One can recognise a PPM-type phosphatase domain in the interval V106–F517. Residues D141, G142, D412, and D508 each contribute to the Mn(2+) site.

It belongs to the PP2C family. Mg(2+) is required as a cofactor.

The protein localises to the mitochondrion. The catalysed reaction is O-phospho-L-seryl-[pyruvate dehydrogenase E1 alpha subunit] + H2O = L-seryl-[pyruvate dehydrogenase E1 alpha subunit] + phosphate. In terms of biological role, mitochondrial enzyme that catalyzes the dephosphorylation and concomitant reactivation of the alpha subunit of the E1 component of the pyruvate dehydrogenase complex (PDC), thereby stimulating the conversion of pyruvate into acetyl-CoA. Acts as a crucial regulator of T cell metabolism and function, with a particular focus on T-helper Th17. This is [Pyruvate dehydrogenase [acetyl-transferring]]-phosphatase 2, mitochondrial from Homo sapiens (Human).